The sequence spans 492 residues: Cysteine--tRNA ligase (492 aa).

Zn(2+) is bound at residue Cys-35. The 'HIGH' region motif lies at 37–47 (PTVYSNVHLGN). Positions 230, 255, and 259 each coordinate Zn(2+). The 'KMSKS' region motif lies at 287–291 (KMAKS). Lys-290 contributes to the ATP binding site.

Belongs to the class-I aminoacyl-tRNA synthetase family. As to quaternary structure, monomer. It depends on Zn(2+) as a cofactor.

It localises to the cytoplasm. It catalyses the reaction tRNA(Cys) + L-cysteine + ATP = L-cysteinyl-tRNA(Cys) + AMP + diphosphate. The polypeptide is Cysteine--tRNA ligase (Flavobacterium johnsoniae (strain ATCC 17061 / DSM 2064 / JCM 8514 / BCRC 14874 / CCUG 350202 / NBRC 14942 / NCIMB 11054 / UW101) (Cytophaga johnsonae)).